The sequence spans 213 residues: Ras-related protein Rab-19 (213 aa).

Ser-24, Val-26, Gly-27, Lys-28, Thr-29, Cys-30, Asp-42, and Thr-47 together coordinate GTP. Thr-29 is a Mg(2+) binding site. The short motif at 37-52 is the Switch 1 element; it reads SGIFMDNQQNTIGVDF. The Mg(2+) site is built by Thr-47 and Asp-70. The Switch 2 signature appears at 72–87; that stretch reads AGQERFRTITQSYYRS. Positions 73, 128, 129, 131, 159, 160, and 161 each coordinate GTP. S-geranylgeranyl cysteine attachment occurs at residues Cys-211 and Cys-213. Cys-213 is modified (cysteine methyl ester).

This sequence belongs to the small GTPase superfamily. Rab family. Mg(2+) serves as cofactor.

It localises to the cell membrane. The enzyme catalyses GTP + H2O = GDP + phosphate + H(+). With respect to regulation, regulated by guanine nucleotide exchange factors (GEFs) which promote the exchange of bound GDP for free GTP. Regulated by GTPase activating proteins (GAPs) which increase the GTP hydrolysis activity. Inhibited by GDP dissociation inhibitors (GDIs). In terms of biological role, the small GTPases Rab are key regulators of intracellular membrane trafficking, from the formation of transport vesicles to their fusion with membranes. Rabs cycle between an inactive GDP-bound form and an active GTP-bound form that is able to recruit to membranes different set of downstream effectors directly responsible for vesicle formation, movement, tethering and fusion. This Xenopus laevis (African clawed frog) protein is Ras-related protein Rab-19 (rab19).